A 374-amino-acid polypeptide reads, in one-letter code: PqqA peptide cyclase (374 aa).

The Radical SAM core domain occupies 4 to 224 (IEPPMGLLAE…ERLKGVMVID (221 aa)). Residues C18, C22, and C25 each contribute to the [4Fe-4S] cluster site.

It belongs to the radical SAM superfamily. PqqE family. As to quaternary structure, interacts with PqqD. The interaction is necessary for activity of PqqE. Requires [4Fe-4S] cluster as cofactor.

The enzyme catalyses [PQQ precursor protein] + S-adenosyl-L-methionine = E-Y cross-linked-[PQQ precursor protein] + 5'-deoxyadenosine + L-methionine + H(+). Its pathway is cofactor biosynthesis; pyrroloquinoline quinone biosynthesis. Its function is as follows. Catalyzes the cross-linking of a glutamate residue and a tyrosine residue in the PqqA protein as part of the biosynthesis of pyrroloquinoline quinone (PQQ). The chain is PqqA peptide cyclase from Granulibacter bethesdensis (strain ATCC BAA-1260 / CGDNIH1).